Consider the following 1374-residue polypeptide: DNA-directed RNA polymerase subunit beta (1374 aa).

It belongs to the RNA polymerase beta chain family. In terms of assembly, the RNAP catalytic core consists of 2 alpha, 1 beta, 1 beta' and 1 omega subunit. When a sigma factor is associated with the core the holoenzyme is formed, which can initiate transcription.

It catalyses the reaction RNA(n) + a ribonucleoside 5'-triphosphate = RNA(n+1) + diphosphate. DNA-dependent RNA polymerase catalyzes the transcription of DNA into RNA using the four ribonucleoside triphosphates as substrates. The chain is DNA-directed RNA polymerase subunit beta from Paracidovorax citrulli (strain AAC00-1) (Acidovorax citrulli).